A 61-amino-acid polypeptide reads, in one-letter code: Putative antitoxin PYRAB11980 (61 aa).

Belongs to the UPF0165 family.

In terms of biological role, possibly the antitoxin component of a type II toxin-antitoxin (TA) system. This chain is Putative antitoxin PYRAB11980, found in Pyrococcus abyssi (strain GE5 / Orsay).